Reading from the N-terminus, the 569-residue chain is Proline--tRNA ligase (569 aa).

Belongs to the class-II aminoacyl-tRNA synthetase family. ProS type 1 subfamily. Homodimer.

The protein resides in the cytoplasm. It carries out the reaction tRNA(Pro) + L-proline + ATP = L-prolyl-tRNA(Pro) + AMP + diphosphate. In terms of biological role, catalyzes the attachment of proline to tRNA(Pro) in a two-step reaction: proline is first activated by ATP to form Pro-AMP and then transferred to the acceptor end of tRNA(Pro). As ProRS can inadvertently accommodate and process non-cognate amino acids such as alanine and cysteine, to avoid such errors it has two additional distinct editing activities against alanine. One activity is designated as 'pretransfer' editing and involves the tRNA(Pro)-independent hydrolysis of activated Ala-AMP. The other activity is designated 'posttransfer' editing and involves deacylation of mischarged Ala-tRNA(Pro). The misacylated Cys-tRNA(Pro) is not edited by ProRS. The chain is Proline--tRNA ligase from Endomicrobium trichonymphae.